The primary structure comprises 140 residues: Organic hydroperoxide resistance protein-like (140 aa).

This sequence belongs to the OsmC/Ohr family.

The chain is Organic hydroperoxide resistance protein-like from Staphylococcus aureus (strain MRSA252).